The following is a 3424-amino-acid chain: Genome polyprotein (3424 aa).

Residues 2 to 15 (SKKPGKSAAKRTVN) are interaction with host EXOC1. Residues 2 to 101 (SKKPGKSAAK…SVNKRKEKKK (100 aa)) lie on the Cytoplasmic side of the membrane. A hydrophobic; homodimerization of capsid protein C region spans residues 35-70 (MLDVRGAPRLILALMAFFRFAAIKPTLGLKKRWRSV). The propeptide at 102-118 (SFSTALLWITMITAVAG) is ER anchor for the capsid protein C, removed in mature form by serine protease NS3. Residues 102-122 (SFSTALLWITMITAVAGLKIS) traverse the membrane as a helical segment. Residues 123 to 244 (SHRDRPLLMV…TTKYLTKVEN (122 aa)) lie on the Extracellular side of the membrane. N-linked (GlcNAc...) asparagine; by host glycosylation is present at Asn-133. A helical transmembrane segment spans residues 245–265 (WVIRNPGYALVALATAWMLGS). The Cytoplasmic segment spans residues 266–270 (NTPQR). A helical membrane pass occupies residues 271 to 285 (VVFMIMMMLIAPAYS). The Extracellular segment spans residues 286–738 (LNCLGISNRD…GVFGTAFRSL (453 aa)). 8 disulfide bridges follow: Cys-288–Cys-315, Cys-345–Cys-401, Cys-345–Cys-406, Cys-359–Cys-390, Cys-377–Cys-401, Cys-377–Cys-406, Cys-475–Cys-573, and Cys-590–Cys-621. A fusion peptide region spans residues 383 to 396 (DRGWGNGCGLFGKG). Residues 739–759 (FGGMSWVTQALMGALLLWLGI) traverse the membrane as a helical segment. The Cytoplasmic portion of the chain corresponds to 760–765 (SARERT). The chain crosses the membrane as a helical span at residues 766-786 (VSLIMLSVGGILLFLAVNVHA). The Extracellular portion of the chain corresponds to 787–1170 (DTGCAIDMAR…EVLRRRWTAN (384 aa)). 8 disulfides stabilise this stretch: Cys-790–Cys-801, Cys-841–Cys-929, Cys-965–Cys-1009, Cys-1067–Cys-1116, Cys-1078–Cys-1099, Cys-1078–Cys-1100, Cys-1099–Cys-1103, and Cys-1100–Cys-1103. Asn-916 and Asn-993 each carry an N-linked (GlcNAc...) asparagine; by host glycan. The helical transmembrane segment at 1171–1191 (LALPTSALLMACFIFGGFTYL) threads the bilayer. The Cytoplasmic segment spans residues 1192–1213 (DLFRYFILVGAAFAEANSGGDV). Residues 1214 to 1234 (VHLAMIAAFNIQPVALVTTFF) traverse the membrane as a helical segment. The Lumenal portion of the chain corresponds to 1235-1276 (RKNWTNRENMILIIAAACTQMACMELKIELFHVMNSLSLAWM). Residues 1277-1297 (ILKALTTGTTSTLAMPFLAAL) form a helical membrane-spanning segment. Topologically, residues 1298–1302 (SPPMN) are cytoplasmic. A helical transmembrane segment spans residues 1303–1323 (WLGLDVVRCLLIMAGVAALIS). Topologically, residues 1324 to 1333 (ERRESLAKKK) are lumenal. The chain crosses the membrane as a helical span at residues 1334–1354 (GALLISAALALTGAFSPLVLQ). The Cytoplasmic segment spans residues 1355–1367 (GALMFTQSLGKRG). A helical transmembrane segment spans residues 1368–1388 (WPASEVLTAVGMTFALAGSVA). Residues 1389-1391 (RLD) are Lumenal-facing. Residues 1392 to 1412 (GGTMAIPLATMAILAVAYVLS) form a helical membrane-spanning segment. Topologically, residues 1413-1469 (GKSTDMWLERCADISWINEAEITGTSPRLDVELDSNGDFKMINDPGVPMWMWTCRMG) are cytoplasmic. The interval 1420–1459 (LERCADISWINEAEITGTSPRLDVELDSNGDFKMINDPGV) is interacts with and activates NS3 protease. An intramembrane region (helical) is located at residues 1470–1490 (LMAMAAYNPVLIPVSMAGYWM). Topologically, residues 1491–2167 (TVKIHKRGGV…ALEELPDTVE (677 aa)) are cytoplasmic. In terms of domain architecture, Peptidase S7 spans 1498-1675 (GGVMWDVPAP…ERQEEETPEA (178 aa)). Catalysis depends on charge relay system; for serine protease NS3 activity residues His-1548, Asp-1572, and Ser-1632. Residues 1678 to 1834 (PDMLKKRRLT…DSNAPIIDQE (157 aa)) form the Helicase ATP-binding domain. Residues 1682–1685 (KKRR) are important for RNA-binding. 1691-1698 (LHPGAGKT) is an ATP binding site. The DEAH box signature appears at 1782 to 1785 (DEAH). The Helicase C-terminal domain occupies 1845 to 2009 (GFEWITEYTG…GLVAQLYGPE (165 aa)). The residue at position 1886 (Lys-1886) is an N6-acetyllysine; by host. The interval 1944–1969 (APITPASAAQRRGRIGRDPTQSGDEY) is disordered. The regulates the ATPase activity of NS3 helicase stretch occupies residues 2160-2164 (EELPD). The chain crosses the membrane as a helical span at residues 2168-2188 (TILLMTMMCVASLGMFTLMVH). At 2189–2190 (RR) the chain is on the lumenal side. The helical intramembrane region spans 2191–2211 (GLGKTGLGTLVLATVTVLLWI). Residues 2212 to 2213 (SD) lie on the Lumenal side of the membrane. Residues 2214 to 2234 (VPAPKIAGVLLIAFLLMIVLI) form a helical membrane-spanning segment. Topologically, residues 2235–2249 (PEPEKQRSQTDNHLA) are cytoplasmic. Residues 2250 to 2264 (IFLVCVLLLIGAVSA) form a helical membrane-spanning segment. Over 2265 to 2299 (NEMGWLETTKKDIGKLFRSSGDTQEQSTWQSWAPE) the chain is Lumenal. Residues 2300-2320 (VRAATAWAGYAGLTVFLTPLF) constitute an intramembrane region (helical). The Lumenal portion of the chain corresponds to 2321–2342 (RHLITTQYVSFSLTAITAQASA). The helical transmembrane segment at 2343 to 2363 (LFGLSAGYPFVGIDLAVGFLL) threads the bilayer. Residues 2364–2371 (LGCYGQYN) lie on the Cytoplasmic side of the membrane. A helical transmembrane segment spans residues 2372 to 2392 (LPTAVATGLLLLAHYGYMIPG). Residues 2393 to 2439 (WQAEAMRAAQKRTAAGVMKNAVVDGIVATDIPEVDTATPITEKKLGQ) are Lumenal-facing. Residues 2440–2460 (ILLILLCGASLLVKFDTMVLV) traverse the membrane as a helical segment. The Cytoplasmic portion of the chain corresponds to 2461–3424 (EAGVLTTSAM…PSPVLFTGAI (964 aa)). Residues 2520-2784 (GGGSAPTLGE…DVCLGSGTRA (265 aa)) enclose the mRNA cap 0-1 NS5-type MT domain. Residue Ser-2575 coordinates S-adenosyl-L-methionine. At Ser-2575 the chain carries Phosphoserine. The active-site For 2'-O-MTase activity is the Lys-2580. Positions 2605, 2606, 2623, 2624, 2650, and 2651 each coordinate S-adenosyl-L-methionine. Catalysis depends on Asp-2665, which acts as the For 2'-O-MTase activity. Residue Ile-2666 coordinates S-adenosyl-L-methionine. Catalysis depends on for 2'-O-MTase activity residues Lys-2700 and Glu-2736. Tyr-2738 is an S-adenosyl-L-methionine binding site. 4 residues coordinate Zn(2+): Glu-2958, His-2962, Cys-2967, and Cys-2970. Residues 3048–3200 (GNMFADDTAG…KPIDDRFASA (153 aa)) form the RdRp catalytic domain. Zn(2+)-binding residues include His-3235, Cys-3251, and Cys-3370.

This sequence in the N-terminal section; belongs to the class I-like SAM-binding methyltransferase superfamily. mRNA cap 0-1 NS5-type methyltransferase family. In terms of assembly, homodimer. Interacts (via N-terminus) with host EXOC1 (via C-terminus); this interaction results in EXOC1 degradation through the proteasome degradation pathway. As to quaternary structure, forms heterodimers with envelope protein E in the endoplasmic reticulum and Golgi. Homodimer; in the endoplasmic reticulum and Golgi. Interacts with protein prM. Interacts with non-structural protein 1. In terms of assembly, homodimer; Homohexamer when secreted. Interacts with envelope protein E. NS1 interacts with NS4B. Interacts with host complement protein CFH; this interaction leads to the degradation of C3. As to quaternary structure, interacts (via N-terminus) with serine protease NS3. Forms a heterodimer with serine protease NS3. May form homooligomers. In terms of assembly, forms a heterodimer with NS2B. Interacts with non-structural protein 2A (via N-terminus). Interacts with NS4B. Interacts with unphosphorylated RNA-directed RNA polymerase NS5; this interaction stimulates RNA-directed RNA polymerase NS5 guanylyltransferase activity. As to quaternary structure, interacts with serine protease NS3. Homodimer. Interacts with host STAT2; this interaction inhibits the phosphorylation of the latter, and, when all viral proteins are present (polyprotein), targets STAT2 for degradation. Interacts with serine protease NS3. In terms of processing, specific enzymatic cleavages in vivo yield mature proteins. Cleavages in the lumen of endoplasmic reticulum are performed by host signal peptidase, whereas cleavages in the cytoplasmic side are performed by serine protease NS3. Signal cleavage at the 2K-4B site requires a prior NS3 protease-mediated cleavage at the 4A-2K site. Post-translationally, cleaved in post-Golgi vesicles by a host furin, releasing the mature small envelope protein M, and peptide pr. This cleavage is incomplete as up to 30% of viral particles still carry uncleaved prM. N-glycosylated. In terms of processing, N-glycosylated. The excreted form is glycosylated and this is required for efficient secretion of the protein from infected cells. Post-translationally, acetylated by host KAT5. Acetylation modulates NS3 RNA-binding and unwinding activities and plays an important positive role for viral replication. Phosphorylated on serines residues. This phosphorylation may trigger NS5 nuclear localization.

Its subcellular location is the virion. It is found in the host nucleus. It localises to the host cytoplasm. The protein localises to the host perinuclear region. The protein resides in the secreted. Its subcellular location is the virion membrane. It is found in the host endoplasmic reticulum membrane. It carries out the reaction Selective hydrolysis of -Xaa-Xaa-|-Yaa- bonds in which each of the Xaa can be either Arg or Lys and Yaa can be either Ser or Ala.. The enzyme catalyses RNA(n) + a ribonucleoside 5'-triphosphate = RNA(n+1) + diphosphate. It catalyses the reaction a ribonucleoside 5'-triphosphate + H2O = a ribonucleoside 5'-diphosphate + phosphate + H(+). The catalysed reaction is ATP + H2O = ADP + phosphate + H(+). It carries out the reaction a 5'-end (5'-triphosphoguanosine)-ribonucleoside in mRNA + S-adenosyl-L-methionine = a 5'-end (N(7)-methyl 5'-triphosphoguanosine)-ribonucleoside in mRNA + S-adenosyl-L-homocysteine. The enzyme catalyses a 5'-end (N(7)-methyl 5'-triphosphoguanosine)-ribonucleoside in mRNA + S-adenosyl-L-methionine = a 5'-end (N(7)-methyl 5'-triphosphoguanosine)-(2'-O-methyl-ribonucleoside) in mRNA + S-adenosyl-L-homocysteine + H(+). In terms of biological role, plays a role in virus budding by binding to the cell membrane and gathering the viral RNA into a nucleocapsid that forms the core of a mature virus particle. During virus entry, may induce genome penetration into the host cytoplasm after hemifusion induced by the surface proteins. Can migrate to the cell nucleus where it modulates host functions. Overcomes the anti-viral effects of host EXOC1 by sequestering and degrading the latter through the proteasome degradation pathway. Inhibits RNA silencing by interfering with host Dicer. Functionally, prevents premature fusion activity of envelope proteins in trans-Golgi by binding to envelope protein E at pH6.0. After virion release in extracellular space, gets dissociated from E dimers. Its function is as follows. Acts as a chaperone for envelope protein E during intracellular virion assembly by masking and inactivating envelope protein E fusion peptide. prM is the only viral peptide matured by host furin in the trans-Golgi network probably to avoid catastrophic activation of the viral fusion activity in acidic Golgi compartment prior to virion release. prM-E cleavage is inefficient, and many virions are only partially matured. These uncleaved prM would play a role in immune evasion. In terms of biological role, may play a role in virus budding. Exerts cytotoxic effects by activating a mitochondrial apoptotic pathway through M ectodomain. May display a viroporin activity. Binds to host cell surface receptor and mediates fusion between viral and cellular membranes. Envelope protein is synthesized in the endoplasmic reticulum in the form of heterodimer with protein prM. They play a role in virion budding in the ER, and the newly formed immature particle is covered with 60 spikes composed of heterodimer between precursor prM and envelope protein E. The virion is transported to the Golgi apparatus where the low pH causes dissociation of PrM-E heterodimers and formation of E homodimers. prM-E cleavage is inefficient, and many virions are only partially matured. These uncleaved prM would play a role in immune evasion. Functionally, involved in immune evasion, pathogenesis and viral replication. Once cleaved off the polyprotein, is targeted to three destinations: the viral replication cycle, the plasma membrane and the extracellular compartment. Essential for viral replication. Required for formation of the replication complex and recruitment of other non-structural proteins to the ER-derived membrane structures. Excreted as a hexameric lipoparticle that plays a role against host immune response. Antagonizing the complement function. Binds to the host macrophages and dendritic cells. Inhibits signal transduction originating from Toll-like receptor 3 (TLR3). Its function is as follows. Component of the viral RNA replication complex that functions in virion assembly and antagonizes the host alpha/beta interferon antiviral response. In terms of biological role, required cofactor for the serine protease function of NS3. May have membrane-destabilizing activity and form viroporins. Displays three enzymatic activities: serine protease, NTPase and RNA helicase. NS3 serine protease, in association with NS2B, performs its autocleavage and cleaves the polyprotein at dibasic sites in the cytoplasm: C-prM, NS2A-NS2B, NS2B-NS3, NS3-NS4A, NS4A-2K and NS4B-NS5. NS3 RNA helicase binds RNA and unwinds dsRNA in the 3' to 5' direction. Functionally, regulates the ATPase activity of the NS3 helicase activity. NS4A allows NS3 helicase to conserve energy during unwinding. Its function is as follows. Functions as a signal peptide for NS4B and is required for the interferon antagonism activity of the latter. In terms of biological role, induces the formation of ER-derived membrane vesicles where the viral replication takes place. Inhibits interferon (IFN)-induced host STAT1 phosphorylation and nuclear translocation, thereby preventing the establishment of cellular antiviral state by blocking the IFN-alpha/beta pathway. Inhibits STAT2 translocation in the nucleus after IFN-alpha treatment. Replicates the viral (+) and (-) RNA genome, and performs the capping of genomes in the cytoplasm. NS5 methylates viral RNA cap at guanine N-7 and ribose 2'-O positions. Besides its role in RNA genome replication, also prevents the establishment of cellular antiviral state by blocking the interferon-alpha/beta (IFN-alpha/beta) signaling pathway. Inhibits host TYK2 and STAT2 phosphorylation, thereby preventing activation of JAK-STAT signaling pathway. In Aedes sp. (Human), this protein is Genome polyprotein.